The chain runs to 442 residues: Signal recognition particle 54 kDa protein (442 aa).

Residues G106 to T113, D186 to R190, and T244 to D247 contribute to the GTP site.

The protein belongs to the GTP-binding SRP family. SRP54 subfamily. Part of the signal recognition particle protein translocation system, which is composed of SRP and FtsY. Archaeal SRP consists of a 7S RNA molecule of 300 nucleotides and two protein subunits: SRP54 and SRP19.

Its subcellular location is the cytoplasm. It catalyses the reaction GTP + H2O = GDP + phosphate + H(+). Functionally, involved in targeting and insertion of nascent membrane proteins into the cytoplasmic membrane. Binds to the hydrophobic signal sequence of the ribosome-nascent chain (RNC) as it emerges from the ribosomes. The SRP-RNC complex is then targeted to the cytoplasmic membrane where it interacts with the SRP receptor FtsY. The protein is Signal recognition particle 54 kDa protein of Methanothermobacter thermautotrophicus (strain ATCC 29096 / DSM 1053 / JCM 10044 / NBRC 100330 / Delta H) (Methanobacterium thermoautotrophicum).